Reading from the N-terminus, the 311-residue chain is tRNA dimethylallyltransferase (311 aa).

10–17 (GPTAVGKT) is a binding site for ATP. 12 to 17 (TAVGKT) contacts substrate. Residues 35–38 (DSMQ) form an interaction with substrate tRNA region.

It belongs to the IPP transferase family. Monomer. Mg(2+) is required as a cofactor.

The enzyme catalyses adenosine(37) in tRNA + dimethylallyl diphosphate = N(6)-dimethylallyladenosine(37) in tRNA + diphosphate. Its function is as follows. Catalyzes the transfer of a dimethylallyl group onto the adenine at position 37 in tRNAs that read codons beginning with uridine, leading to the formation of N6-(dimethylallyl)adenosine (i(6)A). This is tRNA dimethylallyltransferase from Anoxybacillus flavithermus (strain DSM 21510 / WK1).